The primary structure comprises 149 residues: Aquaporin-like protein 2 (149 aa).

The interval 1-35 is disordered; the sequence is MSNESNDLEKNISHLDPTGVDNAYIPPEQPETKHS. Residues 1 to 47 lie on the Cytoplasmic side of the membrane; it reads MSNESNDLEKNISHLDPTGVDNAYIPPEQPETKHSRFNIDRDTLRNH. Residues 48 to 68 form a helical membrane-spanning segment; it reads FIAAVGEFCGTFMFLWCAYVI. Residues 69-89 are Extracellular-facing; sequence CNVANHDVALTTEPEGSHPGQ. The chain crosses the membrane as a helical span at residues 90-110; it reads LIMIALGFGFSVMFSIWCFWW. Residues 111 to 149 lie on the Cytoplasmic side of the membrane; it reads GFEPSRFSLFVFGQSHLTSQMCSDVVSSDHCWDGCWWCR.

It belongs to the MIP/aquaporin (TC 1.A.8) family.

It is found in the endoplasmic reticulum membrane. Its subcellular location is the cell membrane. Functionally, water channel required to facilitate the transport of water across membranes. Involved in freeze tolerance, osmotolerance and cell flocculation in liquid cultures. Is non-functional in most laboratory strains. The sequence is that of Aquaporin-like protein 2 (AQY2-2) from Saccharomyces cerevisiae (strain JAY291) (Baker's yeast).